The chain runs to 130 residues: ATP synthase epsilon chain, chloroplastic (130 aa).

Belongs to the ATPase epsilon chain family. F-type ATPases have 2 components, CF(1) - the catalytic core - and CF(0) - the membrane proton channel. CF(1) has five subunits: alpha(3), beta(3), gamma(1), delta(1), epsilon(1). CF(0) has three main subunits: a, b and c.

It is found in the plastid. Its subcellular location is the chloroplast thylakoid membrane. In terms of biological role, produces ATP from ADP in the presence of a proton gradient across the membrane. The sequence is that of ATP synthase epsilon chain, chloroplastic from Tupiella akineta (Green alga).